The chain runs to 339 residues: DNA-directed RNA polymerase subunit alpha (339 aa).

Residues 1–235 are alpha N-terminal domain (alpha-NTD); that stretch reads MTIQKNWQEL…DQLNVFVNFE (235 aa). Residues 251-339 form an alpha C-terminal domain (alpha-CTD) region; the sequence is FNPAFLKKVD…ELAKRFEDHY (89 aa).

The protein belongs to the RNA polymerase alpha chain family. In terms of assembly, homodimer. The RNAP catalytic core consists of 2 alpha, 1 beta, 1 beta' and 1 omega subunit. When a sigma factor is associated with the core the holoenzyme is formed, which can initiate transcription.

The enzyme catalyses RNA(n) + a ribonucleoside 5'-triphosphate = RNA(n+1) + diphosphate. Functionally, DNA-dependent RNA polymerase catalyzes the transcription of DNA into RNA using the four ribonucleoside triphosphates as substrates. The protein is DNA-directed RNA polymerase subunit alpha of Rhodopseudomonas palustris (strain HaA2).